The chain runs to 349 residues: Protein RecA (349 aa).

An ATP-binding site is contributed by 65-72 (GPESSGKT).

The protein belongs to the RecA family.

The protein localises to the cytoplasm. In terms of biological role, can catalyze the hydrolysis of ATP in the presence of single-stranded DNA, the ATP-dependent uptake of single-stranded DNA by duplex DNA, and the ATP-dependent hybridization of homologous single-stranded DNAs. It interacts with LexA causing its activation and leading to its autocatalytic cleavage. In Acinetobacter baumannii (strain AB307-0294), this protein is Protein RecA.